A 204-amino-acid polypeptide reads, in one-letter code: Imidazoleglycerol-phosphate dehydratase (204 aa).

Belongs to the imidazoleglycerol-phosphate dehydratase family.

The protein resides in the cytoplasm. It carries out the reaction D-erythro-1-(imidazol-4-yl)glycerol 3-phosphate = 3-(imidazol-4-yl)-2-oxopropyl phosphate + H2O. It functions in the pathway amino-acid biosynthesis; L-histidine biosynthesis; L-histidine from 5-phospho-alpha-D-ribose 1-diphosphate: step 6/9. The sequence is that of Imidazoleglycerol-phosphate dehydratase from Corynebacterium urealyticum (strain ATCC 43042 / DSM 7109).